The chain runs to 429 residues: MIVNIIGAGLAGVEVAWKLLNTGVKVRIFEQKPKKFSTVHKNPNFGELVCSNSLKSESLNNAEGILKAEMNILDSLVLKCAYRCRVPAGKALAVDRDKFSQCITEHILSFDNVEVIREEIKSIDLKEDEIWVVATGPTTDGEFANWLSNLTGGFLNFFDAVAPIISGDSIDFNKCFFADRYGKGTSDYINCPMTKEEYERFYKELINAEKIEMEDFDRKLLFERCQPIEEIAKSGEKSLLFGPLRPVGLIDPRTGKMPYAIIQLRKEDENGNMYNLVGFQTRLKWPQQKRIIRLIPGLENAEILRYGVMHRNTYIDSPKVLDEFLRHKKFQNLFFAGQITGVEGYVESAATGIFVGINILRFLEKKELVALPTKTMLGALLNYITTSKQLKPMYANFGLVDVKMGKKEKREKLHKICLEEMKKFLYMLK.

7-12 (GAGLAG) contacts FAD.

This sequence belongs to the MnmG family. TrmFO subfamily. FAD serves as cofactor.

The protein resides in the cytoplasm. It carries out the reaction uridine(54) in tRNA + (6R)-5,10-methylene-5,6,7,8-tetrahydrofolate + NADH + H(+) = 5-methyluridine(54) in tRNA + (6S)-5,6,7,8-tetrahydrofolate + NAD(+). It catalyses the reaction uridine(54) in tRNA + (6R)-5,10-methylene-5,6,7,8-tetrahydrofolate + NADPH + H(+) = 5-methyluridine(54) in tRNA + (6S)-5,6,7,8-tetrahydrofolate + NADP(+). Its function is as follows. Catalyzes the folate-dependent formation of 5-methyl-uridine at position 54 (M-5-U54) in all tRNAs. This Thermosipho melanesiensis (strain DSM 12029 / CIP 104789 / BI429) protein is Methylenetetrahydrofolate--tRNA-(uracil-5-)-methyltransferase TrmFO.